The sequence spans 185 residues: Elongation factor P (185 aa).

It belongs to the elongation factor P family.

Its subcellular location is the cytoplasm. The protein operates within protein biosynthesis; polypeptide chain elongation. Its function is as follows. Involved in peptide bond synthesis. Stimulates efficient translation and peptide-bond synthesis on native or reconstituted 70S ribosomes in vitro. Probably functions indirectly by altering the affinity of the ribosome for aminoacyl-tRNA, thus increasing their reactivity as acceptors for peptidyl transferase. This Bacillus mycoides (strain KBAB4) (Bacillus weihenstephanensis) protein is Elongation factor P.